We begin with the raw amino-acid sequence, 136 residues long: Large-conductance mechanosensitive channel (136 aa).

The Cytoplasmic portion of the chain corresponds to 1-16 (MGLLSEFKAFAVKGNV). The chain crosses the membrane as a helical span at residues 17–45 (VDMAVGIIIGAAFGKIVSSFVGDVIMPPI). Over 46 to 73 (GLLIGGVDFSDLAITLKAEGDVPAVVLA) the chain is Extracellular. A helical membrane pass occupies residues 74–93 (YRKFIQTVLNFVIVAFAIFM). Residues 94 to 136 (GVKAINRLKREEAVAPSEPPVPSAEETLLTEIRDLLKAQQNKS) are Cytoplasmic-facing.

The protein belongs to the MscL family. In terms of assembly, homopentamer.

The protein localises to the cell inner membrane. Its function is as follows. Channel that opens in response to stretch forces in the membrane lipid bilayer. Forms a nonselective ion channel with a conductance of about 4 nanosiemens. May participate in the regulation of osmotic pressure changes within the cell. The chain is Large-conductance mechanosensitive channel from Pseudomonas fluorescens.